Consider the following 385-residue polypeptide: uncharacterized protein (385 aa).

Positions 180, 258, and 275 each coordinate Zn(2+).

It belongs to the iron-containing alcohol dehydrogenase family. Requires Zn(2+) as cofactor.

This is an uncharacterized protein from Synechocystis sp. (strain ATCC 27184 / PCC 6803 / Kazusa).